We begin with the raw amino-acid sequence, 166 residues long: HTH-type transcriptional regulator PetP (166 aa).

Residues 17–152 (DEQLRKGIEA…FRQVLEAMMD (136 aa)) enclose the HTH marR-type domain. The segment at residues 66-89 (VTTLISVLGVTKQSLNRVLRTLID) is a DNA-binding region (H-T-H motif).

In terms of biological role, necessary for photosynthetic and respiratory growth. This chain is HTH-type transcriptional regulator PetP (petP), found in Rhodobacter capsulatus (strain ATCC BAA-309 / NBRC 16581 / SB1003).